Here is a 126-residue protein sequence, read N- to C-terminus: Small ribosomal subunit protein uS13 (126 aa).

The interval 91-126 is disordered; sequence RHRRGLPVRGQRTSTNARTRKGPRRAIAGKKKPGKK. Residues 108 to 126 are compositionally biased toward basic residues; that stretch reads RTRKGPRRAIAGKKKPGKK.

It belongs to the universal ribosomal protein uS13 family. As to quaternary structure, part of the 30S ribosomal subunit. Forms a loose heterodimer with protein S19. Forms two bridges to the 50S subunit in the 70S ribosome.

Its function is as follows. Located at the top of the head of the 30S subunit, it contacts several helices of the 16S rRNA. In the 70S ribosome it contacts the 23S rRNA (bridge B1a) and protein L5 of the 50S subunit (bridge B1b), connecting the 2 subunits; these bridges are implicated in subunit movement. Contacts the tRNAs in the A and P-sites. This chain is Small ribosomal subunit protein uS13, found in Streptomyces coelicolor (strain ATCC BAA-471 / A3(2) / M145).